We begin with the raw amino-acid sequence, 111 residues long: Fluoride-specific ion channel FluC 3 (111 aa).

A run of 3 helical transmembrane segments spans residues 26–46, 53–73, and 91–111; these read IPAGTLTVNLLGSIVLALLTF, VVYLVNIGMLGSFTTFSTFAY, and IFLNVMLCLLGVSIAYLALML. Na(+) is bound by residues G63 and T66.

It belongs to the fluoride channel Fluc/FEX (TC 1.A.43) family.

The protein localises to the cell membrane. It carries out the reaction fluoride(in) = fluoride(out). Its activity is regulated as follows. Na(+) is not transported, but it plays an essential structural role and its presence is essential for fluoride channel function. Its function is as follows. Fluoride-specific ion channel. Important for reducing fluoride concentration in the cell, thus reducing its toxicity. This Methanosarcina acetivorans (strain ATCC 35395 / DSM 2834 / JCM 12185 / C2A) protein is Fluoride-specific ion channel FluC 3.